The sequence spans 259 residues: Ribonuclease PH (259 aa).

Phosphate contacts are provided by residues R88 and G126 to R128.

This sequence belongs to the RNase PH family. In terms of assembly, homohexameric ring arranged as a trimer of dimers.

It catalyses the reaction tRNA(n+1) + phosphate = tRNA(n) + a ribonucleoside 5'-diphosphate. Functionally, phosphorolytic 3'-5' exoribonuclease that plays an important role in tRNA 3'-end maturation. Removes nucleotide residues following the 3'-CCA terminus of tRNAs; can also add nucleotides to the ends of RNA molecules by using nucleoside diphosphates as substrates, but this may not be physiologically important. Probably plays a role in initiation of 16S rRNA degradation (leading to ribosome degradation) during starvation. This Mycobacterium bovis (strain ATCC BAA-935 / AF2122/97) protein is Ribonuclease PH.